Consider the following 244-residue polypeptide: Kallikrein-6 (244 aa).

An N-terminal signal peptide occupies residues 1 to 16; it reads MKKLMVVLSLIAAAWA. A propeptide spans 17–21 (activation peptide); that stretch reads EEQNK. A Peptidase S1 domain is found at 22–242; it reads LVHGGPCDKT…YTNWIQKTIQ (221 aa). 6 disulfide bridges follow: cysteine 28-cysteine 157, cysteine 47-cysteine 63, cysteine 131-cysteine 231, cysteine 138-cysteine 203, cysteine 168-cysteine 182, and cysteine 193-cysteine 218. Active-site charge relay system residues include histidine 62 and aspartate 106. Asparagine 134 carries N-linked (GlcNAc...) asparagine glycosylation. Serine 197 functions as the Charge relay system in the catalytic mechanism.

Inactivated by autolytic cleavage after Arg-80. In terms of tissue distribution, in fluids, highest levels found in milk of lactating women followed by cerebrospinal fluid, nipple aspirate fluid and breast cyst fluid. Also found in serum, seminal plasma and some amniotic fluids and breast tumor cytosolic extracts. Not detected in urine. At the tissue level, highest concentrations found in glandular tissues such as salivary glands followed by lung, colon, fallopian tube, placenta, breast, pituitary and kidney. Not detected in skin, spleen, bone, thyroid, heart, ureter, liver, muscle, endometrium, testis, pancreas, seminal vesicle, ovary, adrenals and prostate. In brain, detected in gray matter neurons (at protein level). Colocalizes with pathological inclusions such as Lewy bodies and glial cytoplasmic inclusions. Overexpressed in primary breast tumors but not expressed in metastatic tumors.

The protein resides in the secreted. It is found in the nucleus. The protein localises to the nucleolus. It localises to the cytoplasm. Its subcellular location is the mitochondrion. The protein resides in the microsome. With respect to regulation, inhibited by a range of serine protease inhibitors including soybean trypsin inhibitor, benzamidine and serpins. Activated by a range of glycosaminoglycans including chondroitin sulfate, dermatan sulfate, heparan sulfate and heparin. Its function is as follows. Serine protease which exhibits a preference for Arg over Lys in the substrate P1 position and for Ser or Pro in the P2 position. Shows activity against amyloid precursor protein, myelin basic protein, gelatin, casein and extracellular matrix proteins such as fibronectin, laminin, vitronectin and collagen. Degrades alpha-synuclein and prevents its polymerization, indicating that it may be involved in the pathogenesis of Parkinson disease and other synucleinopathies. May be involved in regulation of axon outgrowth following spinal cord injury. Tumor cells treated with a neutralizing KLK6 antibody migrate less than control cells, suggesting a role in invasion and metastasis. This is Kallikrein-6 (KLK6) from Homo sapiens (Human).